Reading from the N-terminus, the 424-residue chain is Gamma-glutamyl phosphate reductase (424 aa).

It belongs to the gamma-glutamyl phosphate reductase family.

The protein resides in the cytoplasm. The enzyme catalyses L-glutamate 5-semialdehyde + phosphate + NADP(+) = L-glutamyl 5-phosphate + NADPH + H(+). It participates in amino-acid biosynthesis; L-proline biosynthesis; L-glutamate 5-semialdehyde from L-glutamate: step 2/2. In terms of biological role, catalyzes the NADPH-dependent reduction of L-glutamate 5-phosphate into L-glutamate 5-semialdehyde and phosphate. The product spontaneously undergoes cyclization to form 1-pyrroline-5-carboxylate. This is Gamma-glutamyl phosphate reductase from Halorhodospira halophila (strain DSM 244 / SL1) (Ectothiorhodospira halophila (strain DSM 244 / SL1)).